The primary structure comprises 296 residues: NAD kinase (296 aa).

The active-site Proton acceptor is Asp-73. Residues Asp-73–Gly-74, Lys-78, Asn-151–Glu-152, Arg-178, Asp-180, and Thr-191–Ser-196 each bind NAD(+).

Belongs to the NAD kinase family. Requires a divalent metal cation as cofactor.

Its subcellular location is the cytoplasm. It carries out the reaction NAD(+) + ATP = ADP + NADP(+) + H(+). Involved in the regulation of the intracellular balance of NAD and NADP, and is a key enzyme in the biosynthesis of NADP. Catalyzes specifically the phosphorylation on 2'-hydroxyl of the adenosine moiety of NAD to yield NADP. The protein is NAD kinase of Francisella tularensis subsp. tularensis (strain FSC 198).